The sequence spans 1328 residues: Tubulin polyglutamylase TTLL5 (1328 aa).

Residues 1 to 22 (MPVVMARDLEETASSSEDEDLA) are disordered. In terms of domain architecture, TTL spans 62–407 (RYHLSYKIVR…VCQDPAQRTS (346 aa)). ATP is bound by residues K180, 186 to 187 (RG), 208 to 211 (SRYI), and 221 to 223 (KFD). Residue R186 coordinates a protein. Residue R247 participates in L-glutamate binding. 268–269 (TN) is an ATP binding site. Positions 270, 271, and 293 each coordinate L-glutamate. Mg(2+) contacts are provided by D353, E366, and N368. A c-MTBD region region spans residues 378-488 (PLDLKIKASM…RGGFIRIFPT (111 aa)). L-glutamate is bound at residue K384. 7 disordered regions span residues 411–436 (IYPS…SASD), 585–631 (AQPA…QAKY), 834–853 (HSKS…KGDH), 948–975 (PALL…PAGL), 1006–1032 (SSAK…EGED), 1085–1129 (RSSA…LQTG), and 1212–1271 (RISS…QLNG). The span at 420–432 (RNPFQKPQRTRPL) shows a compositional bias: polar residues. The segment covering 597-617 (ESEEEEEVGLDNDDEEQEASQ) has biased composition (acidic residues). The segment covering 838–847 (SKNSSSYSDS) has biased composition (low complexity). Composition is skewed to polar residues over residues 1116-1128 (THSS…SLQT), 1214-1227 (SSAT…NTLP), 1234-1248 (PNSS…SNHK), and 1257-1271 (QRAS…QLNG).

Belongs to the tubulin--tyrosine ligase family. In terms of assembly, interacts with the transcriptional coactivators NCOA1/SRC-1 and NCOA2/TIF2. The cofactor is Mg(2+). In terms of tissue distribution, highly expressed in brain, kidney, liver, spleen and testis. Expressed in heart, lung, muscle and trachea.

The protein resides in the cell projection. It is found in the cilium. It localises to the cytoplasm. The protein localises to the cytoskeleton. Its subcellular location is the cilium basal body. The protein resides in the nucleus. It catalyses the reaction L-glutamyl-[protein] + L-glutamate + ATP = gamma-L-glutamyl-L-glutamyl-[protein] + ADP + phosphate + H(+). It carries out the reaction (L-glutamyl)(n)-gamma-L-glutamyl-L-glutamyl-[protein] + L-glutamate + ATP = (L-glutamyl)(n+1)-gamma-L-glutamyl-L-glutamyl-[protein] + ADP + phosphate + H(+). Functionally, polyglutamylase which modifies tubulin, generating polyglutamate side chains on the gamma-carboxyl group of specific glutamate residues within the C-terminal tail of tubulin. Preferentially mediates ATP-dependent initiation step of the polyglutamylation reaction over the elongation step. Preferentially modifies the alpha-tubulin tail over a beta-tail. Required for CCSAP localization to both polyglutamylated spindle and cilia microtubules. Increases the effects of transcriptional coactivator NCOA2/TIF2 in glucocorticoid receptor-mediated repression and induction and in androgen receptor-mediated induction. This Mus musculus (Mouse) protein is Tubulin polyglutamylase TTLL5.